The primary structure comprises 162 residues: 2-amino-4-hydroxy-6-hydroxymethyldihydropteridine pyrophosphokinase (162 aa).

Belongs to the HPPK family.

It carries out the reaction 6-hydroxymethyl-7,8-dihydropterin + ATP = (7,8-dihydropterin-6-yl)methyl diphosphate + AMP + H(+). Its pathway is cofactor biosynthesis; tetrahydrofolate biosynthesis; 2-amino-4-hydroxy-6-hydroxymethyl-7,8-dihydropteridine diphosphate from 7,8-dihydroneopterin triphosphate: step 4/4. Its function is as follows. Catalyzes the transfer of pyrophosphate from adenosine triphosphate (ATP) to 6-hydroxymethyl-7,8-dihydropterin, an enzymatic step in folate biosynthesis pathway. This Pseudomonas aeruginosa (strain ATCC 15692 / DSM 22644 / CIP 104116 / JCM 14847 / LMG 12228 / 1C / PRS 101 / PAO1) protein is 2-amino-4-hydroxy-6-hydroxymethyldihydropteridine pyrophosphokinase (folK).